The sequence spans 256 residues: Putative transposase for insertion sequence element IS112 (256 aa).

It belongs to the transposase 11 family.

Involved in the transposition of the insertion sequence IS112 which inactivates the SalI restriction-modification system. This Streptomyces albus G protein is Putative transposase for insertion sequence element IS112.